We begin with the raw amino-acid sequence, 84 residues long: Beta-mammal Tt1g (84 aa).

The first 20 residues, 1 to 20 (MKGMILFISCILLIGIVVEC), serve as a signal peptide directing secretion. The LCN-type CS-alpha/beta domain maps to 21 to 82 (KEGYLMDHEG…VWERATNRCG (62 aa)). 4 disulfides stabilise this stretch: cysteine 31/cysteine 81, cysteine 35/cysteine 57, cysteine 43/cysteine 62, and cysteine 47/cysteine 64. At cysteine 81 the chain carries Cysteine amide.

This sequence belongs to the long (4 C-C) scorpion toxin superfamily. Sodium channel inhibitor family. Beta subfamily. As to expression, expressed by the venom gland.

It is found in the secreted. In terms of biological role, beta toxins modify sodium channel function in two ways: an excitatory effect (shifting the activation process to more negative potential) and/or a depressant effect (reducing the peak current). At concentration of 500 nM this toxin produces channel opening at more negative potentials in hNav1.2/SCN2A and hNav1.3/SCN3A, which shows the biggest effect. On the other hand the peak current is decreased in hNav1.4/SCN4A and hNav1.5/SCN5A channels, without apparent modification of the activation gate. This toxin is active against mammals. The sequence is that of Beta-mammal Tt1g from Tityus trivittatus (Argentinean scorpion).